We begin with the raw amino-acid sequence, 350 residues long: Arginine N-succinyltransferase (350 aa).

Succinyl-CoA is bound at residue Leu-125. The Proton donor role is filled by His-229.

This sequence belongs to the arginine N-succinyltransferase family.

The enzyme catalyses succinyl-CoA + L-arginine = N(2)-succinyl-L-arginine + CoA + H(+). Its pathway is amino-acid degradation; L-arginine degradation via AST pathway; L-glutamate and succinate from L-arginine: step 1/5. Functionally, catalyzes the transfer of succinyl-CoA to arginine to produce N(2)-succinylarginine. This Yersinia pseudotuberculosis serotype O:3 (strain YPIII) protein is Arginine N-succinyltransferase.